We begin with the raw amino-acid sequence, 405 residues long: Cellobiose 2-epimerase (405 aa).

The protein belongs to the cellobiose 2-epimerase family.

It carries out the reaction D-cellobiose = beta-D-glucosyl-(1-&gt;4)-D-mannopyranose. Functionally, catalyzes the reversible epimerization of cellobiose to 4-O-beta-D-glucopyranosyl-D-mannose (Glc-Man). Can also epimerize lactose to epilactose. This chain is Cellobiose 2-epimerase (ce13), found in Eubacterium cellulosolvens.